The primary structure comprises 152 residues: NADH-quinone oxidoreductase subunit A 2 (152 aa).

3 consecutive transmembrane segments (helical) span residues 8-28, 63-83, and 90-110; these read FGKVFLFLLFGVVFVIGGYVS, FYVVALIFIIFDVEVLFLFPW, and LGGFALFEAVIFVTILTLGLV.

Belongs to the complex I subunit 3 family. As to quaternary structure, NDH-1 is composed of 14 different subunits. Subunits NuoA, H, J, K, L, M, N constitute the membrane sector of the complex.

Its subcellular location is the cell inner membrane. It catalyses the reaction a quinone + NADH + 5 H(+)(in) = a quinol + NAD(+) + 4 H(+)(out). NDH-1 shuttles electrons from NADH, via FMN and iron-sulfur (Fe-S) centers, to quinones in the respiratory chain. The immediate electron acceptor for the enzyme in this species is believed to be a menaquinone. Couples the redox reaction to proton translocation (for every two electrons transferred, four hydrogen ions are translocated across the cytoplasmic membrane), and thus conserves the redox energy in a proton gradient. The sequence is that of NADH-quinone oxidoreductase subunit A 2 from Chloroherpeton thalassium (strain ATCC 35110 / GB-78).